Here is a 1102-residue protein sequence, read N- to C-terminus: Carbamoyl phosphate synthase large chain (1102 aa).

Residues Met-1–Glu-408 form a carboxyphosphate synthetic domain region. Positions 129, 175, 181, 182, 214, 216, 221, 247, 248, 249, 291, and 305 each coordinate ATP. Residues Glu-137–Val-334 form the ATP-grasp 1 domain. Mg(2+) contacts are provided by Gln-291, Glu-305, and Asn-307. Residues Gln-291, Glu-305, and Asn-307 each contribute to the Mn(2+) site. The interval Lys-409 to Ser-551 is oligomerization domain. The segment at Glu-552–Tyr-954 is carbamoyl phosphate synthetic domain. In terms of domain architecture, ATP-grasp 2 spans Gly-682–Leu-873. ATP is bound by residues Arg-718, Arg-757, Leu-759, Glu-764, Gly-789, Ile-790, His-791, Ser-792, Gln-832, and Glu-844. Residues Gln-832, Glu-844, and Asn-846 each contribute to the Mg(2+) site. Mn(2+) contacts are provided by Gln-832, Glu-844, and Asn-846. The 146-residue stretch at Gly-955 to Ala-1100 folds into the MGS-like domain. Positions Gly-955–Asp-1102 are allosteric domain.

Belongs to the CarB family. In terms of assembly, composed of two chains; the small (or glutamine) chain promotes the hydrolysis of glutamine to ammonia, which is used by the large (or ammonia) chain to synthesize carbamoyl phosphate. Tetramer of heterodimers (alpha,beta)4. Mg(2+) serves as cofactor. It depends on Mn(2+) as a cofactor.

The catalysed reaction is hydrogencarbonate + L-glutamine + 2 ATP + H2O = carbamoyl phosphate + L-glutamate + 2 ADP + phosphate + 2 H(+). It carries out the reaction hydrogencarbonate + NH4(+) + 2 ATP = carbamoyl phosphate + 2 ADP + phosphate + 2 H(+). It participates in amino-acid biosynthesis; L-arginine biosynthesis; carbamoyl phosphate from bicarbonate: step 1/1. The protein operates within pyrimidine metabolism; UMP biosynthesis via de novo pathway; (S)-dihydroorotate from bicarbonate: step 1/3. Large subunit of the glutamine-dependent carbamoyl phosphate synthetase (CPSase). CPSase catalyzes the formation of carbamoyl phosphate from the ammonia moiety of glutamine, carbonate, and phosphate donated by ATP, constituting the first step of 2 biosynthetic pathways, one leading to arginine and/or urea and the other to pyrimidine nucleotides. The large subunit (synthetase) binds the substrates ammonia (free or transferred from glutamine from the small subunit), hydrogencarbonate and ATP and carries out an ATP-coupled ligase reaction, activating hydrogencarbonate by forming carboxy phosphate which reacts with ammonia to form carbamoyl phosphate. The protein is Carbamoyl phosphate synthase large chain of Streptomyces coelicolor (strain ATCC BAA-471 / A3(2) / M145).